Here is a 372-residue protein sequence, read N- to C-terminus: NAD(P)H-quinone oxidoreductase subunit 1 (372 aa).

8 helical membrane passes run 31 to 51 (PLPM…VVWL), 65 to 85 (PEFI…KLVL), 97 to 117 (LLFT…YLIL), 128 to 148 (VGLG…GLLM), 176 to 196 (LALS…VDIV), 254 to 276 (FALF…AVLY), 304 to 324 (LIFA…LIFL), and 347 to 367 (FLLP…LAFP).

This sequence belongs to the complex I subunit 1 family. As to quaternary structure, NDH-1 is composed of at least 11 different subunits.

It is found in the cellular thylakoid membrane. It catalyses the reaction a plastoquinone + NADH + (n+1) H(+)(in) = a plastoquinol + NAD(+) + n H(+)(out). The catalysed reaction is a plastoquinone + NADPH + (n+1) H(+)(in) = a plastoquinol + NADP(+) + n H(+)(out). In terms of biological role, NDH-1 shuttles electrons from an unknown electron donor, via FMN and iron-sulfur (Fe-S) centers, to quinones in the respiratory and/or the photosynthetic chain. The immediate electron acceptor for the enzyme in this species is believed to be plastoquinone. Couples the redox reaction to proton translocation, and thus conserves the redox energy in a proton gradient. The protein is NAD(P)H-quinone oxidoreductase subunit 1 of Leptolyngbya boryana (Plectonema boryanum).